Consider the following 248-residue polypeptide: Probable transcriptional regulatory protein BOV_1660 (248 aa).

Belongs to the TACO1 family.

It localises to the cytoplasm. This is Probable transcriptional regulatory protein BOV_1660 from Brucella ovis (strain ATCC 25840 / 63/290 / NCTC 10512).